The sequence spans 108 residues: Mitochondrial import inner membrane translocase subunit tim-13 (108 aa).

Positions 45-68 match the Twin CX3C motif motif; that stretch reads CTNKCITAPGSSLASGEKQCLQRC. Cystine bridges form between Cys-45-Cys-68 and Cys-49-Cys-64. The tract at residues 89–108 is disordered; it reads EEMASSGGMGGGFGQGPSFS. The span at 95 to 108 shows a compositional bias: gly residues; that stretch reads GGMGGGFGQGPSFS.

The protein belongs to the small Tim family. Heterohexamer; composed of 3 copies of tim-8/ddp-1 and 3 copies of tin-13/tim-13, named soluble 70 kDa complex. Associates with the TIM22 complex, whose core is composed of tim-22.

The protein localises to the mitochondrion inner membrane. Its function is as follows. Mitochondrial intermembrane chaperone that participates in the import and insertion of some multi-pass transmembrane proteins into the mitochondrial inner membrane. Also required for the transfer of beta-barrel precursors from the TOM complex to the sorting and assembly machinery (SAM complex) of the outer membrane. Acts as a chaperone-like protein that protects the hydrophobic precursors from aggregation and guide them through the mitochondrial intermembrane space. The tim-8-tim-13 complex mediates the import of some proteins while the predominant tim-9/tin-9.1-tim-10/tin-10 70 kDa complex mediates the import of much more proteins. The protein is Mitochondrial import inner membrane translocase subunit tim-13 (tin-13) of Caenorhabditis elegans.